The primary structure comprises 225 residues: Guanylate kinase (225 aa).

The 179-residue stretch at 20 to 198 folds into the Guanylate kinase-like domain; sequence GNLFMVVAPS…ALSELQCLVA (179 aa). Position 27 to 34 (27 to 34) interacts with ATP; sequence APSGAGKS.

It belongs to the guanylate kinase family.

Its subcellular location is the cytoplasm. It catalyses the reaction GMP + ATP = GDP + ADP. Its function is as follows. Essential for recycling GMP and indirectly, cGMP. This Paraburkholderia xenovorans (strain LB400) protein is Guanylate kinase.